The sequence spans 278 residues: Large ribosomal subunit protein uL2 (278 aa).

The segment at V224 to R262 is disordered.

Belongs to the universal ribosomal protein uL2 family. Part of the 50S ribosomal subunit. Forms a bridge to the 30S subunit in the 70S ribosome.

In terms of biological role, one of the primary rRNA binding proteins. Required for association of the 30S and 50S subunits to form the 70S ribosome, for tRNA binding and peptide bond formation. It has been suggested to have peptidyltransferase activity; this is somewhat controversial. Makes several contacts with the 16S rRNA in the 70S ribosome. This Leptospira biflexa serovar Patoc (strain Patoc 1 / Ames) protein is Large ribosomal subunit protein uL2.